The chain runs to 378 residues: MQLRLFRRLLLAALLLVIVWTLFGPSGLGEELLSLSLASLLPAPASPGPPLALPRLLIPNQEACSGPGAPPFLLILVCTAPENLNQRNAIRASWGGLREARGLRVQTLFLLGEPNAQHPVWGSQGSDLASESAAQGDILQAAFQDSYRNLTLKTLSGLNWAEKHCPMARYVLKTDDDVYVNVPELVSELVLRGGRWGQWERSTEPQREAEQEGGQVLHSEEVPLLYLGRVHWRVNPSRTPGGRHRVSEEQWPHTWGPFPPYASGTGYVLSASAVQLILKVASRAPLLPLEDVFVGVSARRGGLAPTQCVKLAGATHYPLDRCCYGKFLLTSHRLDPWKMQEAWKLVGGSDGERTAPFCSWFQGVLGILRCRAIAWLQS.

At 1–8 (MQLRLFRR) the chain is on the cytoplasmic side. Residues 9-19 (LLLAALLLVIV) form a helical; Signal-anchor for type II membrane protein membrane-spanning segment. Over 20–378 (WTLFGPSGLG…RCRAIAWLQS (359 aa)) the chain is Lumenal. N-linked (GlcNAc...) asparagine glycosylation is present at Asn-149.

It belongs to the glycosyltransferase 31 family. Highly expressed in heart, skeletal muscle and pancreas and, to a lesser extent, in brain, placenta, kidney, liver and lung.

The protein resides in the golgi apparatus membrane. The enzyme catalyses a ganglioside GM2 (d18:1(4E)) + UDP-alpha-D-galactose = a ganglioside GM1 (d18:1(4E)) + UDP + H(+). It carries out the reaction a ganglioside GM2 + UDP-alpha-D-galactose = a ganglioside GM1 + UDP + H(+). The catalysed reaction is a ganglioside GD2 (d18:1(4E)) + UDP-alpha-D-galactose = a ganglioside GD1b (d18:1(4E)) + UDP + H(+). It catalyses the reaction a ganglioside GA2 (d18:1(4E)) + UDP-alpha-D-galactose = a ganglioside GA1 (d18:1(4E)) + UDP + H(+). It participates in protein modification; protein glycosylation. Functionally, involved in GM1/GD1B/GA1 ganglioside biosynthesis. This chain is Beta-1,3-galactosyltransferase 4, found in Homo sapiens (Human).